The chain runs to 986 residues: Translation initiation factor IF-2 (986 aa).

Positions 75–94 (KRLSRLEEQSRKTYEKEQHL) are enriched in basic and acidic residues. Disordered stretches follow at residues 75–105 (KRLSRLEEQSRKTYEKEQHLSETLSPPAPPL), 127–148 (PPSKPLEIPVAETPASEEPDAP), 185–258 (SEVP…VSFD), and 277–394 (GRHK…HEED). Composition is skewed to low complexity over residues 185–210 (SEVPESQVLPESRVLPESQVLSESPL) and 218–235 (SEPQEQQELPELPELPEI). A compositionally biased stretch (basic and acidic residues) spans 292-313 (DALKDEFEPKPAEESRVEEKVV). The segment covering 315-338 (AKKPPVKAAADVKPKPVVADSSSS) has biased composition (low complexity). Over residues 339–348 (AKKKGKKKKK) the composition is skewed to basic residues. In terms of domain architecture, tr-type G spans 483–653 (TRPPVVTIMG…LTEAEMRELR (171 aa)). The tract at residues 492 to 499 (GHVDHGKT) is G1. Position 492–499 (492–499 (GHVDHGKT)) interacts with GTP. Residues 517-521 (GITQH) are G2. The segment at 539–542 (DTPG) is G3. GTP is bound by residues 539 to 543 (DTPGH) and 593 to 596 (NKID). Positions 593 to 596 (NKID) are G4. A G5 region spans residues 629-631 (SAK).

It belongs to the TRAFAC class translation factor GTPase superfamily. Classic translation factor GTPase family. IF-2 subfamily.

The protein resides in the cytoplasm. Its function is as follows. One of the essential components for the initiation of protein synthesis. Protects formylmethionyl-tRNA from spontaneous hydrolysis and promotes its binding to the 30S ribosomal subunits. Also involved in the hydrolysis of GTP during the formation of the 70S ribosomal complex. This is Translation initiation factor IF-2 from Pelodictyon phaeoclathratiforme (strain DSM 5477 / BU-1).